Reading from the N-terminus, the 121-residue chain is Large ribosomal subunit protein bL19 (121 aa).

Belongs to the bacterial ribosomal protein bL19 family.

Its function is as follows. This protein is located at the 30S-50S ribosomal subunit interface and may play a role in the structure and function of the aminoacyl-tRNA binding site. The polypeptide is Large ribosomal subunit protein bL19 (rplS) (Borreliella burgdorferi (strain ATCC 35210 / DSM 4680 / CIP 102532 / B31) (Borrelia burgdorferi)).